We begin with the raw amino-acid sequence, 59 residues long: Large ribosomal subunit protein uL30 (59 aa).

It belongs to the universal ribosomal protein uL30 family. Part of the 50S ribosomal subunit.

This Edwardsiella ictaluri (strain 93-146) protein is Large ribosomal subunit protein uL30.